Consider the following 490-residue polypeptide: Ribulose bisphosphate carboxylase large chain (490 aa).

Residues Asn-127 and Thr-177 each coordinate substrate. The active-site Proton acceptor is Lys-179. Lys-181 provides a ligand contact to substrate. The Mg(2+) site is built by Lys-205, Asp-207, and Glu-208. At Lys-205 the chain carries N6-carboxylysine. His-297 acts as the Proton acceptor in catalysis. Residues Arg-298, His-330, and Ser-382 each contribute to the substrate site.

This sequence belongs to the RuBisCO large chain family. Type I subfamily. In terms of assembly, heterohexadecamer of 8 large chains and 8 small chains. Mg(2+) is required as a cofactor.

It localises to the plastid. The protein localises to the chloroplast. It carries out the reaction 2 (2R)-3-phosphoglycerate + 2 H(+) = D-ribulose 1,5-bisphosphate + CO2 + H2O. The catalysed reaction is D-ribulose 1,5-bisphosphate + O2 = 2-phosphoglycolate + (2R)-3-phosphoglycerate + 2 H(+). Functionally, ruBisCO catalyzes two reactions: the carboxylation of D-ribulose 1,5-bisphosphate, the primary event in carbon dioxide fixation, as well as the oxidative fragmentation of the pentose substrate in the photorespiration process. Both reactions occur simultaneously and in competition at the same active site. In Cylindrotheca sp. (strain N1) (Marine diatom), this protein is Ribulose bisphosphate carboxylase large chain.